We begin with the raw amino-acid sequence, 252 residues long: Agamous-like MADS-box protein AGL6 (252 aa).

In terms of domain architecture, MADS-box spans 3–57 (RGRVEMKRIENKINRQVTFSKRRNGLLKKAYELSVLCDAEVALIIFSSRGKLYEF). Positions 86–176 (TQSWCQEVTK…KIKFETEGHA (91 aa)) constitute a K-box domain. Residues 91–173 (QEVTKLKSKY…KQLKIKFETE (83 aa)) adopt a coiled-coil conformation.

In terms of assembly, forms a heterodimer with AGAMOUS. Interacts with AGL15 and AGL16. As to expression, preferentially expressed in flowers.

It is found in the nucleus. Probable transcription factor. Forms a heterodimer via the K-box domain with AG, that could be involved in genes regulation during floral meristem development. In Arabidopsis thaliana (Mouse-ear cress), this protein is Agamous-like MADS-box protein AGL6 (AGL6).